The primary structure comprises 91 residues: MTRMVFCQRLKKEAPGMAFQLVPGELGKRIFDNICQEAWAEWQKKQTMLINEKKLNMMNAEHRALLQTEMEKYLFEDGDVQIEGYVPPSEK.

The protein belongs to the Fe(2+)-trafficking protein family.

Functionally, could be a mediator in iron transactions between iron acquisition and iron-requiring processes, such as synthesis and/or repair of Fe-S clusters in biosynthetic enzymes. The chain is Probable Fe(2+)-trafficking protein from Tolumonas auensis (strain DSM 9187 / NBRC 110442 / TA 4).